Here is a 146-residue protein sequence, read N- to C-terminus: SsrA-binding protein (146 aa).

The span at K127–E139 shows a compositional bias: basic and acidic residues. The segment at K127 to V146 is disordered.

Belongs to the SmpB family.

The protein localises to the cytoplasm. Required for rescue of stalled ribosomes mediated by trans-translation. Binds to transfer-messenger RNA (tmRNA), required for stable association of tmRNA with ribosomes. tmRNA and SmpB together mimic tRNA shape, replacing the anticodon stem-loop with SmpB. tmRNA is encoded by the ssrA gene; the 2 termini fold to resemble tRNA(Ala) and it encodes a 'tag peptide', a short internal open reading frame. During trans-translation Ala-aminoacylated tmRNA acts like a tRNA, entering the A-site of stalled ribosomes, displacing the stalled mRNA. The ribosome then switches to translate the ORF on the tmRNA; the nascent peptide is terminated with the 'tag peptide' encoded by the tmRNA and targeted for degradation. The ribosome is freed to recommence translation, which seems to be the essential function of trans-translation. The protein is SsrA-binding protein of Malacoplasma penetrans (strain HF-2) (Mycoplasma penetrans).